The primary structure comprises 321 residues: tRNA-5-methyluridine(54) 2-sulfurtransferase (321 aa).

Residues Cys3, Cys6, Cys22, and His25 each contribute to the Zn(2+) site. Residues 53 to 55 (AVS), Asp59, and Ile79 contribute to the ATP site. Cys130 and Cys133 together coordinate [4Fe-4S] cluster. Lys137 participates in a covalent cross-link: Glycyl lysine isopeptide (Lys-Gly) (interchain with G-Cter in TtuB). Residues Gly156 and Asp161 each coordinate ATP. Residue Cys222 participates in [4Fe-4S] cluster binding. Glycyl lysine isopeptide (Lys-Gly) (interchain with G-Cter in TtuB) cross-links involve residues Lys226 and Lys229. The Zn(2+) site is built by Cys274, Cys277, Cys286, and Cys289.

The protein belongs to the TtcA family. TtuA subfamily. As to quaternary structure, homodimer. Is able to form a heterocomplex with TtuB. It depends on [4Fe-4S] cluster as a cofactor. Requires Mg(2+) as cofactor. In terms of processing, conjugated to TtuB via covalent linkages involving Lys-137, Lys-226 and Lys-229.

It catalyses the reaction [TtuB sulfur-carrier protein]-C-terminal-Gly-aminoethanethioate + 5-methyluridine(54) in tRNA + ATP + H2O = [TtuB sulfur-carrier protein]-C-terminal Gly-Gly + 5-methyl-2-thiouridine(54) in tRNA + AMP + diphosphate + H(+). It functions in the pathway tRNA modification. With respect to regulation, enzymatic activity may be regulated by TtuB conjugation. Its function is as follows. Catalyzes the ATP-dependent 2-thiolation of 5-methyluridine residue at position 54 in the T loop of tRNAs, leading to 5-methyl-2-thiouridine (m(5)s(2)U or s(2)T). This modification allows thermal stabilization of tRNAs in thermophilic microorganisms, and is required for cell growth at high temperatures. TtuA transfers the S atom from the thiocarboxylated C-terminus of TtuB to tRNA. The sequence is that of tRNA-5-methyluridine(54) 2-sulfurtransferase from Thermus thermophilus (strain ATCC BAA-163 / DSM 7039 / HB27).